The following is an 863-amino-acid chain: Penicillin-binding protein 1A (863 aa).

Residues 1 to 28 (MTENRDNKTSQSEKTTQKKKKKKFKAFK) are Cytoplasmic-facing. A helical; Signal-anchor for type II membrane protein membrane pass occupies residues 29–49 (IILITFITLIVISLVTAIGIT). The Extracellular segment spans residues 50–863 (LAIIKTSPDI…KPIIRPKKHF (814 aa)). Positions 71–248 (SKIYDDKGEL…PSVYYPYSRT (178 aa)) are transglycosylase. E110 acts as the Proton donor; for transglycosylase activity in catalysis. The transpeptidase stretch occupies residues 392 to 674 (ASAVLTDYHT…AAALFGKIMN (283 aa)). S431 acts as the Acyl-ester intermediate; for transpeptidase activity in catalysis. A disordered region spans residues 774–863 (DDDMYVLPDK…KPIIRPKKHF (90 aa)). The segment covering 808 to 836 (EDATNEASTEPSPNTDTVPEDSTNNLDPT) has biased composition (polar residues). The span at 837-846 (KNTEKKPSDK) shows a compositional bias: basic and acidic residues. The span at 847–863 (KNKKHVIKPIIRPKKHF) shows a compositional bias: basic residues.

The protein in the N-terminal section; belongs to the glycosyltransferase 51 family. This sequence in the C-terminal section; belongs to the transpeptidase family.

It is found in the cell membrane. The enzyme catalyses [GlcNAc-(1-&gt;4)-Mur2Ac(oyl-L-Ala-gamma-D-Glu-L-Lys-D-Ala-D-Ala)](n)-di-trans,octa-cis-undecaprenyl diphosphate + beta-D-GlcNAc-(1-&gt;4)-Mur2Ac(oyl-L-Ala-gamma-D-Glu-L-Lys-D-Ala-D-Ala)-di-trans,octa-cis-undecaprenyl diphosphate = [GlcNAc-(1-&gt;4)-Mur2Ac(oyl-L-Ala-gamma-D-Glu-L-Lys-D-Ala-D-Ala)](n+1)-di-trans,octa-cis-undecaprenyl diphosphate + di-trans,octa-cis-undecaprenyl diphosphate + H(+). It carries out the reaction Preferential cleavage: (Ac)2-L-Lys-D-Ala-|-D-Ala. Also transpeptidation of peptidyl-alanyl moieties that are N-acyl substituents of D-alanine.. It participates in cell wall biogenesis; peptidoglycan biosynthesis. Functionally, cell wall formation. Synthesis of cross-linked peptidoglycan from the lipid intermediates. The enzyme has a penicillin-insensitive transglycosylase N-terminal domain (formation of linear glycan strands) and a penicillin-sensitive transpeptidase C-terminal domain (cross-linking of the peptide subunits). The polypeptide is Penicillin-binding protein 1A (pbpA) (Clostridium novyi (strain NT)).